The sequence spans 331 residues: Phosphoribosylformylglycinamidine cyclo-ligase (331 aa).

This sequence belongs to the AIR synthase family.

It localises to the cytoplasm. It catalyses the reaction 2-formamido-N(1)-(5-O-phospho-beta-D-ribosyl)acetamidine + ATP = 5-amino-1-(5-phospho-beta-D-ribosyl)imidazole + ADP + phosphate + H(+). The protein operates within purine metabolism; IMP biosynthesis via de novo pathway; 5-amino-1-(5-phospho-D-ribosyl)imidazole from N(2)-formyl-N(1)-(5-phospho-D-ribosyl)glycinamide: step 2/2. The sequence is that of Phosphoribosylformylglycinamidine cyclo-ligase from Clostridium botulinum (strain Loch Maree / Type A3).